The chain runs to 119 residues: Large ribosomal subunit protein bL20 (119 aa).

This sequence belongs to the bacterial ribosomal protein bL20 family.

Binds directly to 23S ribosomal RNA and is necessary for the in vitro assembly process of the 50S ribosomal subunit. It is not involved in the protein synthesizing functions of that subunit. In Azoarcus sp. (strain BH72), this protein is Large ribosomal subunit protein bL20.